The chain runs to 606 residues: NADH-ubiquinone oxidoreductase chain 5 (606 aa).

The next 15 membrane-spanning stretches (helical) occupy residues 3–23, 38–58, 87–107, 124–144, 180–200, 216–236, 244–264, 276–296, 304–323, 328–350, 369–389, 404–424, 460–480, 483–503, and 586–606; these read VINL…LPII, ITKT…LLFI, FFSL…MEFS, LLLF…LQLF, IGDM…NSWE, LLGL…HPWL, TPVS…FTLI, IQTS…ICAL, IIAL…IGIN, AFIH…GSII, MPIT…MPFL, MSYI…MTAS, LILG…PHTT, MTMP…GFTV, and LMKL…LIAL.

It belongs to the complex I subunit 5 family. In terms of assembly, core subunit of respiratory chain NADH dehydrogenase (Complex I) which is composed of 45 different subunits.

It is found in the mitochondrion inner membrane. It carries out the reaction a ubiquinone + NADH + 5 H(+)(in) = a ubiquinol + NAD(+) + 4 H(+)(out). Core subunit of the mitochondrial membrane respiratory chain NADH dehydrogenase (Complex I) which catalyzes electron transfer from NADH through the respiratory chain, using ubiquinone as an electron acceptor. Essential for the catalytic activity and assembly of complex I. The chain is NADH-ubiquinone oxidoreductase chain 5 (MT-ND5) from Loxodonta africana (African elephant).